The primary structure comprises 799 residues: Integrin beta-1 (799 aa).

The signal sequence occupies residues 1–20; sequence MNLQLVFWIGLISLICSVFG. Residues 21–729 lie on the Extracellular side of the membrane; that stretch reads QTDKNRCLKA…ETPDCPTGPD (709 aa). The PSI domain occupies 26-76; sequence RCLKANAKSCGECIQAGPNCGWCTNTTFLQEGMPTSARCDDLEALKKKGCH. Intrachain disulfides connect Cys-27–Cys-45, Cys-35–Cys-465, Cys-38–Cys-64, Cys-48–Cys-75, Cys-207–Cys-213, Cys-261–Cys-301, Cys-401–Cys-415, Cys-435–Cys-463, Cys-467–Cys-487, Cys-478–Cys-490, Cys-492–Cys-501, Cys-503–Cys-534, Cys-517–Cys-532, Cys-526–Cys-537, Cys-539–Cys-554, Cys-556–Cys-577, Cys-561–Cys-575, Cys-569–Cys-580, Cys-582–Cys-591, Cys-593–Cys-616, Cys-600–Cys-614, Cys-608–Cys-619, Cys-621–Cys-631, Cys-634–Cys-637, Cys-641–Cys-692, Cys-647–Cys-666, Cys-650–Cys-662, and Cys-700–Cys-724. Residues Asn-50, Asn-94, and Asn-97 are each glycosylated (N-linked (GlcNAc...) asparagine). The VWFA domain occupies 140 to 378; sequence DYPIDLYYLM…QLIIDAYNSL (239 aa). 2 residues coordinate Mg(2+): Ser-152 and Ser-154. Ser-154, Asp-157, Asp-158, and Glu-189 together coordinate Ca(2+). A CX3CL1-binding region spans residues 207-213; that stretch reads CTSEQNC. N-linked (GlcNAc...) asparagine glycosylation is present at Asn-212. Ca(2+) is bound by residues Asn-244, Asp-246, Pro-248, and Glu-249. A Mg(2+)-binding site is contributed by Glu-249. An N-linked (GlcNAc...) asparagine glycan is attached at Asn-269. The segment at 295–314 is CX3CL1-binding; sequence LPNDGQCHLENNVYTMSHYY. Residue Gly-362 coordinates Ca(2+). 3 N-linked (GlcNAc...) asparagine glycosylation sites follow: Asn-363, Asn-406, and Asn-417. The interval 383–466 is interaction with TMEM182; the sequence is ILENSKLPDG…VVLQFICKCN (84 aa). 4 I-EGF domains span residues 467 to 502, 503 to 555, 556 to 592, and 593 to 632; these read CQSHGIPASPKCHEGNGTFECGACRCNEGRVGRHCE, CSTD…KFCE, CDNFNCDRSNGLICGGNGVCRCRVCECYPNYTGSACD, and CSLDTVPCVATNGQICNGRGICECGACKCTDPKFQGPTCE. Residue Asn-482 is glycosylated (N-linked (GlcNAc...) asparagine). The N-linked (GlcNAc...) asparagine glycan is linked to Asn-521. Residue Asn-585 is glycosylated (N-linked (GlcNAc...) asparagine). Asn-670 carries N-linked (GlcNAc...) asparagine glycosylation. The helical transmembrane segment at 730–752 threads the bilayer; the sequence is IIPIVAGVVAGIVLIGLALLLIW. The Cytoplasmic portion of the chain corresponds to 753–799; the sequence is KLLMIIHDRREFAKFEKEKMNAKWDTGENPIYKSAVTTVVNPKYEGK. Residues 763 to 768 are signal for sorting from recycling endosomes; interaction with ACAP1; it reads EFAKFE. Thr-778 carries the post-translational modification Phosphothreonine. Position 784 is a phosphotyrosine (Tyr-784). Phosphoserine is present on Ser-786. An interaction with ITGB1BP1 region spans residues 786–793; the sequence is SAVTTVVN. Thr-790 bears the Phosphothreonine mark. An N6-acetyllysine; alternate modification is found at Lys-795. Lys-795 participates in a covalent cross-link: Glycyl lysine isopeptide (Lys-Gly) (interchain with G-Cter in SUMO1); alternate.

This sequence belongs to the integrin beta chain family. As to quaternary structure, interacts with seprase FAP (seprase); the interaction occurs at the cell surface of invadopodia membrane in a collagen-dependent manner. Heterodimer of an alpha and a beta subunit. Beta-1 associates with either alpha-1, alpha-2, alpha-3, alpha-4, alpha-5, alpha-6, alpha-7, alpha-8, alpha-9, alpha-10, alpha-11 or alpha-V. ITGA6:ITGB1 is found in a complex with CD9; interaction takes place in oocytes and is involved in sperm-egg fusion. Binds LGALS3BP and NMRK2, when associated with alpha-7, but not with alpha-5. Interacts with FLNA, FLNB, FLNC and RANBP9. Interacts with KRT1 in the presence of RACK1 and SRC. Interacts with JAML; integrin alpha-4/beta-1 may regulate leukocyte to endothelial cells adhesion by controlling JAML homodimerization. Interacts with RAB21. Interacts (via the cytoplasmic region) with RAB25 (via the hypervariable C-terminal region). Interacts with MYO10. Interacts with ITGB1BP1 (via C-terminal region); the interaction is a prerequisite for focal adhesion disassembly. Interacts with TLN1; the interaction is prevented by competitive binding of ITGB1BP1. Interacts with ACAP1; required for ITGB1 recycling. Interacts with ASAP3. Interacts with FERMT2; the interaction is inhibited in presence of ITGB1BP1. Interacts with DAB2. Interacts with FGR and HCK. Interacts with alpha-7A and alpha-7B in adult skeletal muscle. Interacts with alpha-7B in cardiomyocytes of adult heart. Interacts with EMP2; the interaction may be direct or indirect and ITGB1 has a heterodimer form. ITGA5:ITGB1 interacts with CCN3. ITGA4:ITGB1 is found in a ternary complex with CX3CR1 and CX3CL1. ITGA5:ITGB1 interacts with FBN1. ITGA5:ITGB1 acts as a receptor for fibronectin FN1 and mediates R-G-D-dependent cell adhesion to FN1. ITGA5:ITGB1 interacts with IL1B. Interacts with MDK. ITGA4:ITGB1 interacts with MDK; this interaction mediates MDK-induced osteoblast cells migration through PXN phosphorylation. ITGA6:ITGB1 interacts with MDK; this interaction mediates MDK-induced neurite-outgrowth. ITGA5:ITGB1 interacts with ACE2. Interacts with TMEM182 and LAMB1. Interacts with tensin TNS3; TNS3 also interacts with PEAK1, thus acting as an adapter molecule to bridge the association of PEAK1 with ITGB1. Interacts with tensin TNS4; the interaction displaces tensin TNS3 from the ITGB1 cytoplasmic tail and promotes ITGB1 stability. Integrin ITGA9:ITGB1 interacts with SPP1/OPN (via N-terminus). Integrin ITGA9:ITGB1 interacts with TNC/TNFN3 (via the 3rd Fibronectin type-III domain). Integrins ITGA4:ITGB1 and ITGA9:ITGB1 interact with SVEP1 (via Sushi domain 21); thereby inhibit Ca(2+) intracellular signaling and as a result repress vasocontraction. ITGA4:ITGB1 and ITGA5:ITGB1 interacts with SELP. ITGA5:ITGB1 interacts with IGFBP1. ITGA4:ITGB1 interacts with BCAM. Interacts with ADGRG6.

The protein resides in the cell membrane. The protein localises to the cell projection. It is found in the invadopodium membrane. It localises to the ruffle membrane. Its subcellular location is the recycling endosome. The protein resides in the melanosome. The protein localises to the lamellipodium. It is found in the ruffle. It localises to the cell junction. Its subcellular location is the focal adhesion. In terms of biological role, integrins alpha-1/beta-1, alpha-2/beta-1, alpha-10/beta-1 and alpha-11/beta-1 are receptors for collagen. Integrins alpha-1/beta-1 and alpha-2/beta-2 recognize the proline-hydroxylated sequence G-F-P-G-E-R in collagen. Integrins alpha-2/beta-1, alpha-3/beta-1, alpha-4/beta-1, alpha-5/beta-1, alpha-8/beta-1, alpha-10/beta-1, alpha-11/beta-1 and alpha-V/beta-1 are receptors for fibronectin. Alpha-4/beta-1 recognizes one or more domains within the alternatively spliced CS-1 and CS-5 regions of fibronectin. Integrin alpha-5/beta-1 is a receptor for fibrinogen. Integrin alpha-1/beta-1, alpha-2/beta-1, alpha-6/beta-1 and alpha-7/beta-1 are receptors for lamimin. Integrin alpha-6/beta-1 (ITGA6:ITGB1) is present in oocytes and is involved in sperm-egg fusion. Integrin alpha-4/beta-1 is a receptor for VCAM1 and recognizes the sequence Q-I-D-S in VCAM1. Integrin alpha-9/beta-1 is a receptor for VCAM1, cytotactin and osteopontin. It recognizes the sequence A-E-I-D-G-I-E-L in cytotactin. Integrin alpha-3/beta-1 is a receptor for epiligrin, thrombospondin and CSPG4. Integrin alpha-3/beta-1 provides a docking site for FAP (seprase) at invadopodia plasma membranes in a collagen-dependent manner and hence may participate in the adhesion, formation of invadopodia and matrix degradation processes, promoting cell invasion. Alpha-3/beta-1 may mediate with LGALS3 the stimulation by CSPG4 of endothelial cells migration. Integrin alpha-V/beta-1 is a receptor for vitronectin. Beta-1 integrins recognize the sequence R-G-D in a wide array of ligands. When associated with alpha-7/beta-1 integrin, regulates cell adhesion and laminin matrix deposition. Involved in promoting endothelial cell motility and angiogenesis. Involved in osteoblast compaction through the fibronectin fibrillogenesis cell-mediated matrix assembly process and the formation of mineralized bone nodules. May be involved in up-regulation of the activity of kinases such as PKC via binding to KRT1. Together with KRT1 and RACK1, serves as a platform for SRC activation or inactivation. Plays a mechanistic adhesive role during telophase, required for the successful completion of cytokinesis. ITGA4:ITGB1 binds to fractalkine (CX3CL1) and may act as its coreceptor in CX3CR1-dependent fractalkine signaling. ITGA4:ITGB1 and ITGA5:ITGB1 bind to PLA2G2A via a site (site 2) which is distinct from the classical ligand-binding site (site 1) and this induces integrin conformational changes and enhanced ligand binding to site 1. ITGA5:ITGB1 acts as a receptor for fibrillin-1 (FBN1) and mediates R-G-D-dependent cell adhesion to FBN1. ITGA5:ITGB1 is a receptor for IL1B and binding is essential for IL1B signaling. ITGA5:ITGB3 is a receptor for soluble CD40LG and is required for CD40/CD40LG signaling. Plays an important role in myoblast differentiation and fusion during skeletal myogenesis. ITGA9:ITGB1 may play a crucial role in SVEP1/polydom-mediated myoblast cell adhesion. Integrins ITGA9:ITGB1 and ITGA4:ITGB1 repress PRKCA-mediated L-type voltage-gated channel Ca(2+) influx and ROCK-mediated calcium sensitivity in vascular smooth muscle cells via their interaction with SVEP1, thereby inhibit vasocontraction. The chain is Integrin beta-1 (Itgb1) from Rattus norvegicus (Rat).